We begin with the raw amino-acid sequence, 541 residues long: Chaperonin GroEL (541 aa).

ATP is bound by residues 29–32 (TLGP), 86–90 (DGTTT), Gly-413, 476–478 (NAA), and Asp-492.

It belongs to the chaperonin (HSP60) family. In terms of assembly, forms a cylinder of 14 subunits composed of two heptameric rings stacked back-to-back. Interacts with the co-chaperonin GroES.

The protein resides in the cytoplasm. It catalyses the reaction ATP + H2O + a folded polypeptide = ADP + phosphate + an unfolded polypeptide.. Its function is as follows. Together with its co-chaperonin GroES, plays an essential role in assisting protein folding. The GroEL-GroES system forms a nano-cage that allows encapsulation of the non-native substrate proteins and provides a physical environment optimized to promote and accelerate protein folding. The sequence is that of Chaperonin GroEL from Streptococcus equi subsp. equi (strain 4047).